Here is a 403-residue protein sequence, read N- to C-terminus: Alkaline protease 1 (403 aa).

A signal peptide spans 1 to 21; that stretch reads MLSIKRTLLLLGAVLPAVFGA. Positions 22 to 125 are excised as a propeptide; it reads PVQETRRAAQ…QIWYIDALTT (104 aa). The Inhibitor I9 domain occupies 36 to 120; the sequence is KYIVTFKPGT…HVEEDQIWYI (85 aa). The Peptidase S8 domain maps to 130 to 403; the sequence is PWGLGSISHK…PNKLAYNGNA (274 aa). Active-site charge relay system residues include Asp162 and His193. 2 N-linked (GlcNAc...) asparagine glycosylation sites follow: Asn253 and Asn307. Ser349 (charge relay system) is an active-site residue.

It belongs to the peptidase S8 family.

The protein localises to the secreted. It catalyses the reaction Hydrolysis of proteins with broad specificity, and of Bz-Arg-OEt &gt; Ac-Tyr-OEt. Does not hydrolyze peptide amides.. Secreted alkaline protease that allows assimilation of proteinaceous substrates. The chain is Alkaline protease 1 (alp1) from Neosartorya fischeri (strain ATCC 1020 / DSM 3700 / CBS 544.65 / FGSC A1164 / JCM 1740 / NRRL 181 / WB 181) (Aspergillus fischerianus).